The following is an 89-amino-acid chain: Small ribosomal subunit protein uS15 (89 aa).

Belongs to the universal ribosomal protein uS15 family. Part of the 30S ribosomal subunit. Forms a bridge to the 50S subunit in the 70S ribosome, contacting the 23S rRNA.

In terms of biological role, one of the primary rRNA binding proteins, it binds directly to 16S rRNA where it helps nucleate assembly of the platform of the 30S subunit by binding and bridging several RNA helices of the 16S rRNA. Functionally, forms an intersubunit bridge (bridge B4) with the 23S rRNA of the 50S subunit in the ribosome. In Methylobacterium sp. (strain 4-46), this protein is Small ribosomal subunit protein uS15.